The primary structure comprises 530 residues: uncharacterized protein (530 aa).

The protein belongs to the mimivirus R640 family.

This is an uncharacterized protein from Acanthamoeba polyphaga (Amoeba).